Reading from the N-terminus, the 360-residue chain is F-box protein SKP2B (360 aa).

Residues 25–76 form the F-box domain; it reads ISEWKDIPVELLMKILNLVDDRTVIIASCICSGWRDAVSLGLTRLSLSWCKK. LRR repeat units lie at residues 77-99, 101-126, 127-152, 153-178, 180-205, 206-231, 232-257, 258-301, and 302-333; these read NMNS…VLRQ, KPQL…DLSK, SSKI…NLSG, CTSF…NLCG, VEAV…NLGW, CENI…DLCS, CVLI…GLYY, CRNI…NISQ, and CTYL…VMSG.

Functionally, component of SCF(SKP2B) E3 ubiquitin ligase complexes, which mediate the ubiquitination and subsequent proteasomal degradation of the cyclin-dependent kinase inhibitor KRP1. Does not interact with auxin. The chain is F-box protein SKP2B (SKP2B) from Arabidopsis thaliana (Mouse-ear cress).